The sequence spans 270 residues: Putative pyruvate, phosphate dikinase regulatory protein (270 aa).

An ADP-binding site is contributed by glycine 148–threonine 155.

This sequence belongs to the pyruvate, phosphate/water dikinase regulatory protein family. PDRP subfamily.

It catalyses the reaction N(tele)-phospho-L-histidyl/L-threonyl-[pyruvate, phosphate dikinase] + ADP = N(tele)-phospho-L-histidyl/O-phospho-L-threonyl-[pyruvate, phosphate dikinase] + AMP + H(+). The enzyme catalyses N(tele)-phospho-L-histidyl/O-phospho-L-threonyl-[pyruvate, phosphate dikinase] + phosphate + H(+) = N(tele)-phospho-L-histidyl/L-threonyl-[pyruvate, phosphate dikinase] + diphosphate. Its function is as follows. Bifunctional serine/threonine kinase and phosphorylase involved in the regulation of the pyruvate, phosphate dikinase (PPDK) by catalyzing its phosphorylation/dephosphorylation. This Bacillus cereus (strain B4264) protein is Putative pyruvate, phosphate dikinase regulatory protein.